A 210-amino-acid polypeptide reads, in one-letter code: Large ribosomal subunit protein uL4 (210 aa).

In terms of assembly, part of the 50S ribosomal subunit. In terms of processing, the N-terminus is blocked.

One of the primary rRNA binding proteins, this protein initially binds near the 5'-end of the 23S rRNA. It is important during the early stages of 50S assembly. It makes multiple contacts with different domains of the 23S rRNA in the assembled 50S subunit and ribosome. Its function is as follows. Forms part of the polypeptide exit tunnel. Functionally, this protein can be incorporated into E.coli ribosomes in vivo, which resulted in decreased peptidyltransferase (Ptase) activity of the hybrid ribosomes. The hybrid 50S subunits associate less well with 30S subunits to form the ribosome. This is Large ribosomal subunit protein uL4 (rplD) from Thermus thermophilus (strain ATCC 27634 / DSM 579 / HB8).